The chain runs to 426 residues: Transcription termination factor Rho (426 aa).

The Rho RNA-BD domain occupies 58-131 (QSLARGYLDI…VRVEAVNGLD (74 aa)). Residues 176–181 (GRGQRA), 188–193 (KAGKTT), and Arg219 each bind ATP.

The protein belongs to the Rho family. As to quaternary structure, homohexamer. The homohexamer assembles into an open ring structure.

Functionally, facilitates transcription termination by a mechanism that involves Rho binding to the nascent RNA, activation of Rho's RNA-dependent ATPase activity, and release of the mRNA from the DNA template. The polypeptide is Transcription termination factor Rho (Deinococcus radiodurans (strain ATCC 13939 / DSM 20539 / JCM 16871 / CCUG 27074 / LMG 4051 / NBRC 15346 / NCIMB 9279 / VKM B-1422 / R1)).